Consider the following 444-residue polypeptide: 3-phosphoshikimate 1-carboxyvinyltransferase (444 aa).

Positions 29, 30, and 34 each coordinate 3-phosphoshikimate. Lysine 29 is a phosphoenolpyruvate binding site. Phosphoenolpyruvate-binding residues include glycine 102 and arginine 131. Serine 176, glutamine 178, aspartate 326, and lysine 353 together coordinate 3-phosphoshikimate. Glutamine 178 is a binding site for phosphoenolpyruvate. Aspartate 326 serves as the catalytic Proton acceptor. Phosphoenolpyruvate-binding residues include arginine 357 and arginine 399.

It belongs to the EPSP synthase family. In terms of assembly, monomer.

The protein localises to the cytoplasm. The enzyme catalyses 3-phosphoshikimate + phosphoenolpyruvate = 5-O-(1-carboxyvinyl)-3-phosphoshikimate + phosphate. The protein operates within metabolic intermediate biosynthesis; chorismate biosynthesis; chorismate from D-erythrose 4-phosphate and phosphoenolpyruvate: step 6/7. Functionally, catalyzes the transfer of the enolpyruvyl moiety of phosphoenolpyruvate (PEP) to the 5-hydroxyl of shikimate-3-phosphate (S3P) to produce enolpyruvyl shikimate-3-phosphate and inorganic phosphate. In Synechococcus sp. (strain JA-3-3Ab) (Cyanobacteria bacterium Yellowstone A-Prime), this protein is 3-phosphoshikimate 1-carboxyvinyltransferase.